A 473-amino-acid chain; its full sequence is Serine/threonine-protein phosphatase T (473 aa).

3 TPR repeats span residues 5-38 (ALEL…DSTN), 40-72 (ILYS…DPEY), and 73-106 (AKAY…APSD). Residues 159–472 (KQITKEFVED…MAYANGLLSG (314 aa)) form a catalytic region. Residues Asp-217, His-219, Asp-246, and Asn-278 each coordinate Mn(2+). The active-site Proton donor/acceptor is the His-279. Mn(2+)-binding residues include His-327 and His-404.

The protein belongs to the PPP phosphatase family. PP-5 (PP-T) subfamily. Mg(2+) is required as a cofactor. It depends on Mn(2+) as a cofactor.

It is found in the nucleus. It carries out the reaction O-phospho-L-seryl-[protein] + H2O = L-seryl-[protein] + phosphate. It catalyses the reaction O-phospho-L-threonyl-[protein] + H2O = L-threonyl-[protein] + phosphate. Protein phosphatase that specifically binds to and dephosphorylates the molecular chaperone Hsp90. Dephosphorylation positively regulates the Hsp90 chaperone machinery. The sequence is that of Serine/threonine-protein phosphatase T (ppt1) from Schizosaccharomyces pombe (strain 972 / ATCC 24843) (Fission yeast).